The chain runs to 436 residues: 3-ketoacyl-CoA thiolase (436 aa).

Cysteine 99 acts as the Acyl-thioester intermediate in catalysis. Catalysis depends on proton acceptor residues histidine 392 and cysteine 422.

Belongs to the thiolase-like superfamily. Thiolase family. In terms of assembly, heterotetramer of two alpha chains (FadJ) and two beta chains (FadI).

The protein resides in the cytoplasm. It carries out the reaction an acyl-CoA + acetyl-CoA = a 3-oxoacyl-CoA + CoA. The protein operates within lipid metabolism; fatty acid beta-oxidation. Its function is as follows. Catalyzes the final step of fatty acid oxidation in which acetyl-CoA is released and the CoA ester of a fatty acid two carbons shorter is formed. In Escherichia coli O7:K1 (strain IAI39 / ExPEC), this protein is 3-ketoacyl-CoA thiolase.